The chain runs to 197 residues: OV-16 antigen (197 aa).

A signal peptide spans 1–16 (MHCLQVVIAIVLYSFG). Residues Asn-56, Asn-61, Asn-119, and Asn-124 are each glycosylated (N-linked (GlcNAc...) asparagine).

It belongs to the phosphatidylethanolamine-binding protein family. In terms of tissue distribution, hypodermis, cuticle and uterus.

The polypeptide is OV-16 antigen (OV16) (Onchocerca volvulus).